The following is a 438-amino-acid chain: Serine hydroxymethyltransferase (438 aa).

Residues Leu-133 and 137–139 each bind (6S)-5,6,7,8-tetrahydrofolate; that span reads GHL. Lys-242 bears the N6-(pyridoxal phosphate)lysine mark.

This sequence belongs to the SHMT family. Homodimer. The cofactor is pyridoxal 5'-phosphate.

Its subcellular location is the cytoplasm. The enzyme catalyses (6R)-5,10-methylene-5,6,7,8-tetrahydrofolate + glycine + H2O = (6S)-5,6,7,8-tetrahydrofolate + L-serine. It participates in one-carbon metabolism; tetrahydrofolate interconversion. It functions in the pathway amino-acid biosynthesis; glycine biosynthesis; glycine from L-serine: step 1/1. In terms of biological role, catalyzes the reversible interconversion of serine and glycine with tetrahydrofolate (THF) serving as the one-carbon carrier. This reaction serves as the major source of one-carbon groups required for the biosynthesis of purines, thymidylate, methionine, and other important biomolecules. Also exhibits THF-independent aldolase activity toward beta-hydroxyamino acids, producing glycine and aldehydes, via a retro-aldol mechanism. The polypeptide is Serine hydroxymethyltransferase (Brucella canis (strain ATCC 23365 / NCTC 10854 / RM-666)).